A 521-amino-acid chain; its full sequence is MAAVLANGDSQGRPQRNYQVVVAGTRDMGIGKDGVLPWKLPGDLKFFKELTLTTSDPVKKNAVIMGRKTWESIPVKSRPLPGRLNVILTRSGSFDFATVENVVICGSMESALELLASTPYCLSIEKVFVIGGGQVLREYLKGPACEAIHLTDIQSSIECDTFIPPVDFSVFQPWYSSFPVIESNIRHSFVSFVRVRKSVAETHESNGKESTEVDTKNDKFETENFSFLPKMVYDRHEEYQYLNLVEDIIRSGAQKNDRTGTGTLSKFGCQMRFNLRKNFPLLTTKRVFWRGVVEELLWFISGSTNAKVLQEKGIHIWDGNASREYLNSVGLAHREEGDLGPIYGFQWRHFGAEYTDMHADYTGKGFDQLMDVIDKIKNDPEDRRIILSAWNPSDLKKMALPPCHMFAQFYVENGELSCQMYQRSADMGLGVPFNIASYSLLTYMIAQVCDLSPGDFVHVIGDAHVYRNHVRALEEQIQKMPKPFPILKINPSKKDIDSFMASDFKLVGYDPHQKIEMKMAV.

Residues N17 to R194 enclose the DHFR domain. V21 is a substrate binding site. NADP(+)-binding positions include A23 and G29–V35. D43 lines the substrate pocket. NADP(+)-binding positions include R67–T69 and L88–S91. I130 serves as a coordination point for substrate. G131–E138 is a binding site for NADP(+). T151 serves as a coordination point for substrate. Positions K197–V521 are thymidylate synthase. Residue R258 coordinates dUMP. Residue C403 is part of the active site. Residues H404, Q422–D426, N434, and H464–Y466 contribute to the dUMP site.

It in the N-terminal section; belongs to the dihydrofolate reductase family. The protein in the C-terminal section; belongs to the thymidylate synthase family.

The catalysed reaction is (6S)-5,6,7,8-tetrahydrofolate + NADP(+) = 7,8-dihydrofolate + NADPH + H(+). It carries out the reaction dUMP + (6R)-5,10-methylene-5,6,7,8-tetrahydrofolate = 7,8-dihydrofolate + dTMP. It participates in cofactor biosynthesis; tetrahydrofolate biosynthesis; 5,6,7,8-tetrahydrofolate from 7,8-dihydrofolate: step 1/1. Its function is as follows. Bifunctional enzyme. Involved in de novo dTMP biosynthesis. Key enzyme in folate metabolism. Can play two different roles depending on the source of dihydrofolate: de novo synthesis of tetrahydrofolate or recycling of the dihydrofolate released as one of the end products of the TS catalyzed reaction. Catalyzes an essential reaction for de novo glycine and purine synthesis, DNA precursor synthesis, and for the conversion of dUMP to dTMP. The sequence is that of Bifunctional dihydrofolate reductase-thymidylate synthase (DRTS) from Zea mays (Maize).